A 279-amino-acid chain; its full sequence is Ribosomal RNA small subunit methyltransferase J (279 aa).

S-adenosyl-L-methionine is bound by residues 138–139 (ER) and D194.

It belongs to the methyltransferase superfamily. RsmJ family.

Its subcellular location is the cytoplasm. The enzyme catalyses guanosine(1516) in 16S rRNA + S-adenosyl-L-methionine = N(2)-methylguanosine(1516) in 16S rRNA + S-adenosyl-L-homocysteine + H(+). Specifically methylates the guanosine in position 1516 of 16S rRNA. The polypeptide is Ribosomal RNA small subunit methyltransferase J (Acinetobacter baumannii (strain AYE)).